The primary structure comprises 325 residues: MFLYLCFIFQRTCSEEMEEENATLLTEFVLTGFLHQPDCKIPLFLAFLVIYLITIMGNLGLIVLIWKDPHLHIPMYLFLGSLAFVDASLSSTVTPKMLINFLAKSKMISLSECMVQFFSLVTTVTTECFLLATMAYDRYVAICKALLYPVIMTNELCIQLLVLSFIGGLLHALIHEAFSFRLTFCNSNIIQHFYCDIIPLLKISCTDSSINFLMVFIFAGSVQVFTIGTILISYTIILFTILEKKSIKGIRKAVSTCGAHLLSVSLYYGPLTFKYLGSASPQADDQDMMESLFYTVIVPLLNPMIYSLRNKQVIASFTKMFKSNV.

At 1-41 (MFLYLCFIFQRTCSEEMEEENATLLTEFVLTGFLHQPDCKI) the chain is on the extracellular side. Asn-21 is a glycosylation site (N-linked (GlcNAc...) asparagine). Residues 42 to 62 (PLFLAFLVIYLITIMGNLGLI) traverse the membrane as a helical segment. The Cytoplasmic portion of the chain corresponds to 63–70 (VLIWKDPH). The helical transmembrane segment at 71–91 (LHIPMYLFLGSLAFVDASLSS) threads the bilayer. At 92 to 115 (TVTPKMLINFLAKSKMISLSECMV) the chain is on the extracellular side. Cysteines 113 and 205 form a disulfide. The chain crosses the membrane as a helical span at residues 116 to 136 (QFFSLVTTVTTECFLLATMAY). Topologically, residues 137-155 (DRYVAICKALLYPVIMTNE) are cytoplasmic. A helical transmembrane segment spans residues 156–176 (LCIQLLVLSFIGGLLHALIHE). The Extracellular segment spans residues 177 to 212 (AFSFRLTFCNSNIIQHFYCDIIPLLKISCTDSSINF). A helical transmembrane segment spans residues 213–233 (LMVFIFAGSVQVFTIGTILIS). Residues 234-253 (YTIILFTILEKKSIKGIRKA) are Cytoplasmic-facing. A helical transmembrane segment spans residues 254–274 (VSTCGAHLLSVSLYYGPLTFK). Residues 275–287 (YLGSASPQADDQD) lie on the Extracellular side of the membrane. Residues 288–308 (MMESLFYTVIVPLLNPMIYSL) form a helical membrane-spanning segment. At 309–325 (RNKQVIASFTKMFKSNV) the chain is on the cytoplasmic side.

Belongs to the G-protein coupled receptor 1 family.

The protein resides in the cell membrane. Odorant receptor. This is Olfactory receptor 5H6 (OR5H6) from Homo sapiens (Human).